The sequence spans 85 residues: ATP synthase subunit c (85 aa).

2 helical membrane passes run 1–21 (MLAW…ALVG) and 53–73 (LLFA…VALI).

Belongs to the ATPase C chain family. F-type ATPases have 2 components, F(1) - the catalytic core - and F(0) - the membrane proton channel. F(1) has five subunits: alpha(3), beta(3), gamma(1), delta(1), epsilon(1). F(0) has three main subunits: a(1), b(2) and c(10-14). The alpha and beta chains form an alternating ring which encloses part of the gamma chain. F(1) is attached to F(0) by a central stalk formed by the gamma and epsilon chains, while a peripheral stalk is formed by the delta and b chains.

Its subcellular location is the cell inner membrane. Its function is as follows. F(1)F(0) ATP synthase produces ATP from ADP in the presence of a proton or sodium gradient. F-type ATPases consist of two structural domains, F(1) containing the extramembraneous catalytic core and F(0) containing the membrane proton channel, linked together by a central stalk and a peripheral stalk. During catalysis, ATP synthesis in the catalytic domain of F(1) is coupled via a rotary mechanism of the central stalk subunits to proton translocation. Functionally, key component of the F(0) channel; it plays a direct role in translocation across the membrane. A homomeric c-ring of between 10-14 subunits forms the central stalk rotor element with the F(1) delta and epsilon subunits. This chain is ATP synthase subunit c, found in Dictyoglomus turgidum (strain DSM 6724 / Z-1310).